We begin with the raw amino-acid sequence, 199 residues long: MARCKS-related protein (199 aa).

The disordered stretch occupies residues 1–199; it reads MGSQSSKAPR…PTPAGAEQNE (199 aa). Gly-2 carries N-myristoyl glycine lipidation. A Phosphothreonine modification is found at Thr-14. The segment covering 16–26 has biased composition (low complexity); sequence EEAAGASPAKA. A phosphoserine mark is found at Ser-22, Ser-36, and Ser-48. Low complexity predominate over residues 53 to 64; that stretch reads GTDEAAGATGDA. Residue Ser-71 is modified to Phosphoserine. Over residues 76 to 85 the composition is skewed to basic and acidic residues; the sequence is AKGDAPPKET. Thr-85 carries the phosphothreonine modification. The span at 86 to 98 shows a compositional bias: basic residues; that stretch reads PKKKKKFSFKKPF. The interval 87–110 is effector domain involved in lipid-binding and calmodulin-binding; sequence KKKKKFSFKKPFKLSGLSFKRNRK. A phosphoserine; by PKC mark is found at Ser-93, Ser-101, and Ser-104. A Phosphoserine modification is found at Ser-119. At Ser-120 the chain carries Phosphoserine; by MAPK8. Phosphoserine is present on Ser-135. Residue Thr-148 is modified to Phosphothreonine; by MAPK8. The residue at position 151 (Ser-151) is a Phosphoserine. A compositionally biased stretch (low complexity) spans 156–167; sequence AKGAEAGAACKG. Phosphothreonine is present on Thr-170. Low complexity predominate over residues 181–199; that stretch reads STPSGPESGPTPAGAEQNE. At Thr-182 the chain carries Phosphothreonine; by MAPK8. Phosphothreonine is present on Thr-191.

This sequence belongs to the MARCKS family. Binds to filamentous actin (F-actin), but not to monomeric G-actin, independently of its phosphorylation status. Interacts with calmodulin. Post-translationally, phosphorylated. Phosphorylation at Ser-120 and Thr-182 is non-redundantly catalyzed by MAPK8 in vivo. Phosphorylation at Thr-148 is preferentially catalyzed by MAPK8 in vivo, but this modification can also be catalyzed by other kinases in the absence of MAPK8. May be phosphorylated by protein kinase C, which disrupts the interaction with calmodulin.

It localises to the cytoplasm. Its subcellular location is the cytoskeleton. It is found in the cell membrane. Its function is as follows. Controls cell movement by regulating actin cytoskeleton homeostasis and filopodium and lamellipodium formation. When unphosphorylated, induces cell migration. When phosphorylated by MAPK8, induces actin bundles formation and stabilization, thereby reducing actin plasticity, hence restricting cell movement, including neuronal migration. May be involved in coupling the protein kinase C and calmodulin signal transduction systems. The protein is MARCKS-related protein (MARCKSL1) of Oryctolagus cuniculus (Rabbit).